The sequence spans 231 residues: Protein OPG061 (231 aa).

This sequence belongs to the orthopoxvirus OPG058 family.

It is found in the host nucleus. The protein localises to the host nucleolus. The sequence is that of Protein OPG061 (OPG061) from Homo sapiens (Human).